Consider the following 129-residue polypeptide: NADPH-dependent 7-cyano-7-deazaguanine reductase (129 aa).

C42 (thioimide intermediate) is an active-site residue. The Proton donor role is filled by D49. Substrate-binding positions include 64–66 and 83–84; these read VEL and HE.

It belongs to the GTP cyclohydrolase I family. QueF type 1 subfamily.

The protein localises to the cytoplasm. It carries out the reaction 7-aminomethyl-7-carbaguanine + 2 NADP(+) = 7-cyano-7-deazaguanine + 2 NADPH + 3 H(+). The protein operates within tRNA modification; tRNA-queuosine biosynthesis. Catalyzes the NADPH-dependent reduction of 7-cyano-7-deazaguanine (preQ0) to 7-aminomethyl-7-deazaguanine (preQ1). The chain is NADPH-dependent 7-cyano-7-deazaguanine reductase from Synechococcus sp. (strain CC9605).